The primary structure comprises 491 residues: Glutamyl-tRNA(Gln) amidotransferase subunit A (491 aa).

Catalysis depends on charge relay system residues Lys77 and Ser152. Catalysis depends on Ser176, which acts as the Acyl-ester intermediate.

This sequence belongs to the amidase family. GatA subfamily. Heterotrimer of A, B and C subunits.

It carries out the reaction L-glutamyl-tRNA(Gln) + L-glutamine + ATP + H2O = L-glutaminyl-tRNA(Gln) + L-glutamate + ADP + phosphate + H(+). Functionally, allows the formation of correctly charged Gln-tRNA(Gln) through the transamidation of misacylated Glu-tRNA(Gln) in organisms which lack glutaminyl-tRNA synthetase. The reaction takes place in the presence of glutamine and ATP through an activated gamma-phospho-Glu-tRNA(Gln). This Chlamydia trachomatis serovar A (strain ATCC VR-571B / DSM 19440 / HAR-13) protein is Glutamyl-tRNA(Gln) amidotransferase subunit A.